Consider the following 34-residue polypeptide: Photosystem II reaction center protein Psb30 (34 aa).

The helical transmembrane segment at 6–26 (VIGQLLSATLIVLAGPAVIFV) threads the bilayer.

Belongs to the Psb30/Ycf12 family. PSII is composed of 1 copy each of membrane proteins PsbA, PsbB, PsbC, PsbD, PsbE, PsbF, PsbH, PsbI, PsbJ, PsbK, PsbL, PsbM, PsbT, PsbX, PsbY, PsbZ, Psb30/Ycf12, peripheral proteins of the oxygen-evolving complex and a large number of cofactors. It forms dimeric complexes.

The protein localises to the plastid. It localises to the chloroplast thylakoid membrane. Its function is as follows. A core subunit of photosystem II (PSII), probably helps stabilize the reaction center. This is Photosystem II reaction center protein Psb30 from Heterosigma akashiwo (strain NIES-293 / 8280G21-1).